Reading from the N-terminus, the 508-residue chain is Maturase K (508 aa).

It belongs to the intron maturase 2 family. MatK subfamily.

Its subcellular location is the plastid. The protein localises to the chloroplast. Its function is as follows. Usually encoded in the trnK tRNA gene intron. Probably assists in splicing its own and other chloroplast group II introns. The polypeptide is Maturase K (Manilkara zapota (Sapodilla plum)).